The following is a 430-amino-acid chain: Glutamate-1-semialdehyde 2,1-aminomutase (430 aa).

Residue Lys-265 is modified to N6-(pyridoxal phosphate)lysine.

Belongs to the class-III pyridoxal-phosphate-dependent aminotransferase family. HemL subfamily. In terms of assembly, homodimer. Pyridoxal 5'-phosphate serves as cofactor.

Its subcellular location is the cytoplasm. It carries out the reaction (S)-4-amino-5-oxopentanoate = 5-aminolevulinate. It functions in the pathway porphyrin-containing compound metabolism; protoporphyrin-IX biosynthesis; 5-aminolevulinate from L-glutamyl-tRNA(Glu): step 2/2. In Shewanella oneidensis (strain ATCC 700550 / JCM 31522 / CIP 106686 / LMG 19005 / NCIMB 14063 / MR-1), this protein is Glutamate-1-semialdehyde 2,1-aminomutase.